We begin with the raw amino-acid sequence, 481 residues long: Cysteine--tRNA ligase (481 aa).

Position 27 (Cys27) interacts with Zn(2+). The 'HIGH' region motif lies at 29-39 (PTVYNYAHIGN). Zn(2+)-binding residues include Cys222, His247, and Glu251. The 'KMSKS' region signature appears at 279 to 283 (KMSKS). An ATP-binding site is contributed by Lys282.

Belongs to the class-I aminoacyl-tRNA synthetase family. In terms of assembly, monomer. It depends on Zn(2+) as a cofactor.

It localises to the cytoplasm. The catalysed reaction is tRNA(Cys) + L-cysteine + ATP = L-cysteinyl-tRNA(Cys) + AMP + diphosphate. The protein is Cysteine--tRNA ligase of Borrelia hermsii (strain HS1 / DAH).